A 718-amino-acid chain; its full sequence is Ribosomal RNA large subunit methyltransferase K/L (718 aa).

The THUMP domain maps to 44–155 (DAYKVCIYSY…KQFVNVFLCL (112 aa)).

Belongs to the methyltransferase superfamily. RlmKL family.

It is found in the cytoplasm. The catalysed reaction is guanosine(2445) in 23S rRNA + S-adenosyl-L-methionine = N(2)-methylguanosine(2445) in 23S rRNA + S-adenosyl-L-homocysteine + H(+). It catalyses the reaction guanosine(2069) in 23S rRNA + S-adenosyl-L-methionine = N(2)-methylguanosine(2069) in 23S rRNA + S-adenosyl-L-homocysteine + H(+). Specifically methylates the guanine in position 2445 (m2G2445) and the guanine in position 2069 (m7G2069) of 23S rRNA. This Francisella tularensis subsp. novicida (strain U112) protein is Ribosomal RNA large subunit methyltransferase K/L.